A 163-amino-acid chain; its full sequence is Crossover junction endodeoxyribonuclease RuvC (163 aa).

Residues Asp-4, Glu-65, and Asp-138 contribute to the active site. Mg(2+)-binding residues include Asp-4, Glu-65, and Asp-138.

Belongs to the RuvC family. As to quaternary structure, homodimer which binds Holliday junction (HJ) DNA. The HJ becomes 2-fold symmetrical on binding to RuvC with unstacked arms; it has a different conformation from HJ DNA in complex with RuvA. In the full resolvosome a probable DNA-RuvA(4)-RuvB(12)-RuvC(2) complex forms which resolves the HJ. Mg(2+) is required as a cofactor.

The protein resides in the cytoplasm. The catalysed reaction is Endonucleolytic cleavage at a junction such as a reciprocal single-stranded crossover between two homologous DNA duplexes (Holliday junction).. Its function is as follows. The RuvA-RuvB-RuvC complex processes Holliday junction (HJ) DNA during genetic recombination and DNA repair. Endonuclease that resolves HJ intermediates. Cleaves cruciform DNA by making single-stranded nicks across the HJ at symmetrical positions within the homologous arms, yielding a 5'-phosphate and a 3'-hydroxyl group; requires a central core of homology in the junction. The consensus cleavage sequence is 5'-(A/T)TT(C/G)-3'. Cleavage occurs on the 3'-side of the TT dinucleotide at the point of strand exchange. HJ branch migration catalyzed by RuvA-RuvB allows RuvC to scan DNA until it finds its consensus sequence, where it cleaves and resolves the cruciform DNA. In Corynebacterium diphtheriae (strain ATCC 700971 / NCTC 13129 / Biotype gravis), this protein is Crossover junction endodeoxyribonuclease RuvC.